We begin with the raw amino-acid sequence, 316 residues long: tRNA dimethylallyltransferase (316 aa).

17-24 (GPTASGKT) is a binding site for ATP. 19–24 (TASGKT) is a substrate binding site. Interaction with substrate tRNA regions lie at residues 42–45 (DSVL), 166–170 (QRLSR), 247–252 (RCVGYR), and 280–287 (KRQITWLR).

The protein belongs to the IPP transferase family. Monomer. Requires Mg(2+) as cofactor.

It carries out the reaction adenosine(37) in tRNA + dimethylallyl diphosphate = N(6)-dimethylallyladenosine(37) in tRNA + diphosphate. In terms of biological role, catalyzes the transfer of a dimethylallyl group onto the adenine at position 37 in tRNAs that read codons beginning with uridine, leading to the formation of N6-(dimethylallyl)adenosine (i(6)A). The protein is tRNA dimethylallyltransferase of Shigella flexneri.